The following is a 330-amino-acid chain: ADP-L-glycero-D-manno-heptose-6-epimerase (330 aa).

Residues 11–12 (FI), 32–33 (DN), Lys39, Lys54, 75–79 (EGACS), and Asn92 contribute to the NADP(+) site. The active-site Proton acceptor is the Tyr139. Lys143 provides a ligand contact to NADP(+). Substrate is bound at residue Asn168. NADP(+) contacts are provided by Val169 and Lys177. Lys177 acts as the Proton acceptor in catalysis. Residues Arg179, His186, 200-203 (FGEY), Arg213, and Tyr292 contribute to the substrate site.

This sequence belongs to the NAD(P)-dependent epimerase/dehydratase family. HldD subfamily. Homopentamer. It depends on NADP(+) as a cofactor.

The enzyme catalyses ADP-D-glycero-beta-D-manno-heptose = ADP-L-glycero-beta-D-manno-heptose. The protein operates within nucleotide-sugar biosynthesis; ADP-L-glycero-beta-D-manno-heptose biosynthesis; ADP-L-glycero-beta-D-manno-heptose from D-glycero-beta-D-manno-heptose 7-phosphate: step 4/4. Functionally, catalyzes the interconversion between ADP-D-glycero-beta-D-manno-heptose and ADP-L-glycero-beta-D-manno-heptose via an epimerization at carbon 6 of the heptose. This chain is ADP-L-glycero-D-manno-heptose-6-epimerase, found in Burkholderia pseudomallei (strain K96243).